We begin with the raw amino-acid sequence, 68 residues long: Large ribosomal subunit protein uL29 (68 aa).

The protein belongs to the universal ribosomal protein uL29 family.

In Persephonella marina (strain DSM 14350 / EX-H1), this protein is Large ribosomal subunit protein uL29.